The sequence spans 468 residues: Homocitrate synthase (468 aa).

Residues 11-266 (VGILDSTLRE…IEVVDLKKLS (256 aa)) form the Pyruvate carboxyltransferase domain. 2-oxoglutarate is bound at residue R19. E20 contributes to the Mg(2+) binding site. Residues H83, R143, and T177 each contribute to the 2-oxoglutarate site. The Mg(2+) site is built by H205 and H207. The Proton acceptor role is filled by H299.

This sequence belongs to the alpha-IPM synthase/homocitrate synthase family. Homocitrate synthase LYS20/LYS21 subfamily. Requires Mg(2+) as cofactor. The cofactor is Mn(2+).

It catalyses the reaction acetyl-CoA + 2-oxoglutarate + H2O = (2R)-homocitrate + CoA + H(+). It functions in the pathway amino-acid biosynthesis; L-lysine biosynthesis via AAA pathway; L-alpha-aminoadipate from 2-oxoglutarate: step 1/5. With respect to regulation, inhibited by lysine. Its function is as follows. Catalyzes the aldol-type condensation of 2-oxoglutarate with acetyl-CoA to yield homocitrate. Carries out the first step of the alpha-aminoadipate (AAA) lysine biosynthesis pathway. Does not display 2-isopropylmalate synthase and citramalate synthase activities since it cannot use 2-oxoisovalerate or pyruvate as substrate. This chain is Homocitrate synthase, found in Sulfolobus acidocaldarius (strain ATCC 33909 / DSM 639 / JCM 8929 / NBRC 15157 / NCIMB 11770).